The following is a 154-amino-acid chain: MAEAAPQEAQQNFAIQRIFLKDVSFEAPNSPVIFQKEWNPDVKLDLDTQSRELGEGVYEVVLRLTVTVKNEEETAFLCEVQQGGIFTAEQMEAGQLAHCLGAFCPNILFPYARETISSLVVKGTFPQLNLAPVNFDALFMNYLQQQAQQGEAQA.

It belongs to the SecB family. In terms of assembly, homotetramer, a dimer of dimers. One homotetramer interacts with 1 SecA dimer.

The protein localises to the cytoplasm. Its function is as follows. One of the proteins required for the normal export of preproteins out of the cell cytoplasm. It is a molecular chaperone that binds to a subset of precursor proteins, maintaining them in a translocation-competent state. It also specifically binds to its receptor SecA. This Vibrio parahaemolyticus serotype O3:K6 (strain RIMD 2210633) protein is Protein-export protein SecB.